Reading from the N-terminus, the 85-residue chain is MEKLTFLILVATVLLTIHVLVQSVGDKHLKRRPKQYATKHLSALMRGHRQCTQQGYGCDETEECCSNLSCKCSGSPLCTSSYCRP.

The N-terminal stretch at 1 to 23 (MEKLTFLILVATVLLTIHVLVQS) is a signal peptide. Residues 24–49 (VGDKHLKRRPKQYATKHLSALMRGHR) constitute a propeptide that is removed on maturation. At Gln50 the chain carries Pyrrolidone carboxylic acid.

The protein belongs to the conotoxin O2 superfamily. Post-translationally, contains 4 disulfide bonds. In terms of tissue distribution, expressed by the venom duct.

The protein resides in the secreted. This is Conotoxin Cap15a from Conus capitaneus (Captain cone).